A 1460-amino-acid polypeptide reads, in one-letter code: Collagen alpha-1(I) chain (1460 aa).

The signal sequence occupies residues 1 to 22; sequence MFSFVDLRLLLLLAATALLTHG. The propeptide at 23-157 is N-terminal propeptide; it reads QEEGQEEDIP…PPGLGGNFAP (135 aa). Residues 34-92 form the VWFC domain; that stretch reads VTCVQNGLRYYDRDVWKPEACRICVCDNGNVLCDDVICDETKNCPGAQVPPGECCPVCP. A disordered region spans residues 96 to 1213; sequence ASPTDQETTG…KAHDGGRYYR (1118 aa). The segment covering 134–149 has biased composition (pro residues); that stretch reads PGLPGPPGPPGPPGPP. The nonhelical region (N-terminal) stretch occupies residues 158–174; sequence QMSYGYDEKSTGGISVP. Lys-166 carries the allysine modification. The residue at position 167 (Ser-167) is a Phosphoserine. The tract at residues 175–1188 is triple-helical region; it reads GPMGPSGPRG…PGPPGPPGPP (1014 aa). 4-hydroxyproline occurs at positions 186, 189, 192, 201, 204, 207, 222, 237, 243, 252, and 258. The span at 194 to 213 shows a compositional bias: low complexity; sequence PQGFQGPPGEPGEPGASGPM. Residues 225 to 239 show a composition bias toward basic and acidic residues; that stretch reads NGDDGEAGKPGRPGE. Lys-261 bears the 5-hydroxylysine; alternate mark. Lys-261 is a glycosylation site (O-linked (Gal...) hydroxylysine; alternate). Ser-267 is subject to Phosphoserine. Positions 275–291 are enriched in low complexity; that stretch reads DAGPAGPKGEPGSPGEN. 4-hydroxyproline is present on residues Pro-285, Pro-288, Pro-294, Pro-303, and Pro-309. Over residues 314–327 the composition is skewed to low complexity; it reads PAGARGNDGATGAA. Over residues 329–341 the composition is skewed to pro residues; the sequence is PPGPTGPAGPPGF. A 4-hydroxyproline mark is found at Pro-330, Pro-339, Pro-342, Pro-369, Pro-372, Pro-384, Pro-390, Pro-399, Pro-405, Pro-408, and Pro-423. Low complexity predominate over residues 375 to 414; sequence AGAAGPAGNPGADGQPGAKGANGAPGIAGAPGFPGARGPS. Lys-426 carries the post-translational modification 5-hydroxylysine. 8 positions are modified to 4-hydroxyproline: Pro-432, Pro-435, Pro-447, Pro-456, Pro-471, Pro-477, Pro-486, and Pro-492. Positions 481–490 are enriched in gly residues; that stretch reads GERGGPGSRG. Lys-501 is subject to 5-hydroxylysine. Pro-510, Pro-519, Pro-525, Pro-531, Pro-540, Pro-543, Pro-552, Pro-561, Pro-567, Pro-579, Pro-588, Pro-597, Pro-600, Pro-618, Pro-636, Pro-642, Pro-648, Pro-654, Pro-660, Pro-666, Pro-678, Pro-687, Pro-699, Pro-711, Pro-714, Pro-720, Pro-726, and Pro-735 each carry 4-hydroxyproline. A compositionally biased stretch (low complexity) spans 534–560; that stretch reads KGLTGSPGSPGPDGKTGPPGPAGQDGR. Residues 569 to 588 show a composition bias toward low complexity; it reads ARGQAGVMGFPGPKGAAGEP. The segment covering 630–657 has biased composition (low complexity); the sequence is QGPAGSPGFQGLPGPAGPPGEAGKPGEQ. Residues 692-720 are compositionally biased toward low complexity; the sequence is PRGANGAPGNDGAKGDAGAPGAPGSQGAP. Residues 741–743 carry the Cell attachment site motif; the sequence is RGD. Lys-747 carries the 5-hydroxylysine modification. Residues Pro-753, Pro-768, and Pro-774 each carry the 4-hydroxyproline modification. Over residues 780 to 794 the composition is skewed to low complexity; that stretch reads AGPSGPAGPTGARGA. Ser-783 bears the Phosphoserine mark. 4-hydroxyproline occurs at positions 795, 801, 804, 813, 819, 837, 846, and 855. The span at 807 to 834 shows a compositional bias: low complexity; it reads AGFAGPPGADGQPGAKGEPGDAGAKGDA. Residues 836–848 are compositionally biased toward pro residues; sequence PPGPAGPTGPPGP. At Lys-858 the chain carries 5-hydroxylysine. Over residues 863-879 the composition is skewed to low complexity; that stretch reads SAGPPGATGFPGAAGRV. 2 positions are modified to 4-hydroxyproline: Pro-867 and Pro-873. Pro-881 carries the 3-hydroxyproline modification. 4-hydroxyproline is present on residues Pro-882, Pro-891, Pro-894, Pro-915, Pro-924, Pro-933, Pro-942, Pro-960, Pro-969, Pro-972, Pro-978, Pro-993, Pro-999, Pro-1005, Pro-1014, and Pro-1020. Over residues 908–917 the composition is skewed to low complexity; the sequence is ETGPAGRPGE. Over residues 927–951 the composition is skewed to low complexity; sequence AGEKGSPGADGPAGAPGTPGPQGIA. Over residues 992 to 1002 the composition is skewed to pro residues; the sequence is PPGPMGPPGLA. Residues 1004–1019 are compositionally biased toward low complexity; it reads PPGESGREGSPGAEGS. Lys-1029 carries the 5-hydroxylysine modification. A compositionally biased stretch (pro residues) spans 1038–1053; sequence AGPPGAPGAPGAPGPV. 4-hydroxyproline occurs at positions 1041, 1044, and 1047. The span at 1074–1088 shows a compositional bias: low complexity; sequence IGPVGARGPAGPQGP. The short motif at 1089–1091 is the Cell attachment site element; that stretch reads RGD. Over residues 1089–1103 the composition is skewed to basic and acidic residues; that stretch reads RGDKGETGEQGDRGI. Lys-1092 is modified (5-hydroxylysine). Lys-1104 bears the 5-hydroxylysine; alternate mark. O-linked (Gal...) hydroxylysine; alternate glycosylation occurs at Lys-1104. 4-hydroxyproline occurs at positions 1116, 1119, 1122, 1140, and 1155. Over residues 1122–1155 the composition is skewed to low complexity; it reads PGEQGPSGASGPAGPRGPPGSAGSPGKDGLNGLP. Pro-1160 carries the post-translational modification 3-hydroxyproline. Pro-1161 is modified (4-hydroxyproline). Pro residues predominate over residues 1173–1188; sequence VGPPGPPGPPGPPGPP. The residue at position 1175 (Pro-1175) is a 3-hydroxyproline. Pro-1176 is subject to 4-hydroxyproline. Pro-1178 bears the 3-hydroxyproline mark. Pro-1179 is subject to 4-hydroxyproline. Pro-1181 bears the 3-hydroxyproline mark. 3 positions are modified to 4-hydroxyproline: Pro-1182, Pro-1185, and Pro-1188. Positions 1189–1214 are nonhelical region (C-terminal); it reads SGGFDFSFLPQPPQEKAHDGGRYYRA. Basic and acidic residues predominate over residues 1203-1213; sequence EKAHDGGRYYR. Lys-1204 carries the allysine modification. Residues 1215–1460 constitute a propeptide, C-terminal propeptide; the sequence is DDANVVRDRD…GMDIGPVCFL (246 aa). The region spanning 1225-1460 is the Fibrillar collagen NC1 domain; the sequence is LEVDTTLKSL…GMDIGPVCFL (236 aa). Intrachain disulfides connect Cys-1255–Cys-1287, Cys-1295–Cys-1458, and Cys-1366–Cys-1411. 5 residues coordinate Ca(2+): Asp-1273, Asn-1275, Gln-1276, Cys-1278, and Asp-1281. Asn-1361 is a glycosylation site (N-linked (GlcNAc...) asparagine).

This sequence belongs to the fibrillar collagen family. In terms of assembly, trimers of one alpha 2(I) and two alpha 1(I) chains. Interacts with MRC2. Interacts with TRAM2. Interacts with MFAP4 in a Ca (2+)-dependent manner. In terms of processing, contains mostly 4-hydroxyproline. Proline residues at the third position of the tripeptide repeating unit (G-X-Y) are hydroxylated in some or all of the chains. Contains 3-hydroxyproline at a few sites. This modification occurs on the first proline residue in the sequence motif Gly-Pro-Hyp, where Hyp is 4-hydroxyproline. Post-translationally, lysine residues at the third position of the tripeptide repeating unit (G-X-Y) are 5-hydroxylated in some or all of the chains. In terms of processing, O-glycosylated on hydroxylated lysine residues. The O-linked glycan consists of a Glc-Gal disaccharide.

The protein localises to the secreted. It localises to the extracellular space. The protein resides in the extracellular matrix. In terms of biological role, type I collagen is a member of group I collagen (fibrillar forming collagen). This Canis lupus familiaris (Dog) protein is Collagen alpha-1(I) chain (COL1A1).